Consider the following 130-residue polypeptide: Histone H2A.1 (130 aa).

The segment at Met-1–Ala-22 is disordered. Ser-2 is subject to N-acetylserine. An N6-acetyllysine mark is found at Lys-5 and Lys-7. At Gln-105 the chain carries N5-methylglutamine. Position 127 is a phosphoserine (Ser-127). A [ST]-Q motif motif is present at residues Ser-127 to Gln-128.

This sequence belongs to the histone H2A family. The nucleosome is a histone octamer containing two molecules each of H2A, H2B, H3 and H4 assembled in one H3-H4 heterotetramer and two H2A-H2B heterodimers. The octamer wraps approximately 147 bp of DNA. In terms of processing, phosphorylated to form H2AS128ph (gamma-H2A) in response to DNA double-strand breaks (DSBs) generated by exogenous genotoxic agents and by stalled replication forks. Phosphorylation is dependent on the DNA damage checkpoint kinases MEC1/ATR and TEL1/ATM, spreads on either side of a detected DSB site and may mark the surrounding chromatin for recruitment of proteins required for DNA damage signaling and repair. Gamma-H2A is removed from the DNA prior to the strand invasion-primer extension step of the repair process and subsequently dephosphorylated. Dephosphorylation is necessary for efficient recovery from the DNA damage checkpoint. Acetylated by ESA1 to form H2AK4ac and H2AK7ac.

Its subcellular location is the nucleus. The protein localises to the chromosome. Its function is as follows. Core component of nucleosome which plays a central role in DNA double strand break (DSB) repair. Nucleosomes wrap and compact DNA into chromatin, limiting DNA accessibility to the cellular machineries which require DNA as a template. Histones thereby play a central role in transcription regulation, DNA repair, DNA replication and chromosomal stability. DNA accessibility is regulated via a complex set of post-translational modifications of histones, also called histone code, and nucleosome remodeling. The polypeptide is Histone H2A.1 (HTA1) (Lodderomyces elongisporus (strain ATCC 11503 / CBS 2605 / JCM 1781 / NBRC 1676 / NRRL YB-4239) (Yeast)).